A 283-amino-acid polypeptide reads, in one-letter code: Protein boule-like (283 aa).

The tract at residues methionine 1–proline 25 is disordered. An RRM domain is found at asparagine 33–arginine 110. The DAZ domain occupies proline 160–glutamine 184.

It belongs to the RRM DAZ family. As to quaternary structure, interacts with DAZ1 and DAZL. As to expression, testis specific. Not expressed in early embryos, primordial germ cells and spermatogonial cells. First expressed in the cytoplasm of spermatocytes and then persists through meiosis.

The protein resides in the cytoplasm. In terms of biological role, probable RNA-binding protein, which may be required during spermatogenesis. May act by binding to the 3'-UTR of mRNAs and regulating their translation. The polypeptide is Protein boule-like (BOLL) (Homo sapiens (Human)).